The primary structure comprises 256 residues: tRNA (guanine-N(7)-)-methyltransferase (256 aa).

Residues 1-43 (MDVDPVNSEMELDNKPTCETVPGLPQKKHYRQRAHSNPHSDHD) form a disordered region. The span at 26–36 (QKKHYRQRAHS) shows a compositional bias: basic residues. Residues Gly-74, 97–98 (EI), 132–133 (NA), and Leu-152 each bind S-adenosyl-L-methionine. The active site involves Asp-155. An S-adenosyl-L-methionine-binding site is contributed by 230 to 232 (TEE).

It belongs to the class I-like SAM-binding methyltransferase superfamily. TrmB family.

The protein localises to the nucleus. It carries out the reaction guanosine(46) in tRNA + S-adenosyl-L-methionine = N(7)-methylguanosine(46) in tRNA + S-adenosyl-L-homocysteine. It functions in the pathway tRNA modification; N(7)-methylguanine-tRNA biosynthesis. Its function is as follows. Catalyzes the formation of N(7)-methylguanine at position 46 (m7G46) in tRNA. This is tRNA (guanine-N(7)-)-methyltransferase from Caenorhabditis briggsae.